Consider the following 100-residue polypeptide: Small ribosomal subunit protein uS14 (100 aa).

This sequence belongs to the universal ribosomal protein uS14 family. As to quaternary structure, part of the 30S ribosomal subunit. Contacts proteins S3 and S10.

Functionally, binds 16S rRNA, required for the assembly of 30S particles and may also be responsible for determining the conformation of the 16S rRNA at the A site. The protein is Small ribosomal subunit protein uS14 of Synechocystis sp. (strain ATCC 27184 / PCC 6803 / Kazusa).